A 1173-amino-acid polypeptide reads, in one-letter code: Pumilio homolog 2 (1173 aa).

5 disordered regions span residues 41–68, 265–296, 480–518, 592–662, and 730–759; these read VSSA…PLSG, VSKL…ASPT, QQAA…ESLA, LTGA…SLGF, and PISM…SSSL. Over residues 287–296 the composition is skewed to polar residues; the sequence is TPGSRQASPT. The segment covering 480 to 492 has biased composition (low complexity); sequence QQAATQASQGQQQ. Residues 493 to 518 show a composition bias toward polar residues; it reads VMRATSNQRPLTPNQAQQGQQPESLA. A compositionally biased stretch (low complexity) spans 606–622; that stretch reads QQQQQQQQQQHQQQQQQ. The segment covering 623–633 has biased composition (polar residues); it reads PNANLHSNSFY. Over residues 634–657 the composition is skewed to low complexity; it reads GNSTMSNNSQSSSLFSPGPGQPGS. The PUM-HD domain maps to 815 to 1155; it reads GRSRLLEDFR…HILAKLEKYY (341 aa). Pumilio repeat units lie at residues 835–870, 871–906, 907–942, 943–978, 979–1014, 1015–1050, 1051–1086, 1087–1129, and 1130–1167; these read DLMG…LVFS, EILQ…ALAT, RIRG…EMVR, ELDG…FIIE, AFKG…PILE, ELHQ…KIVC, EVRG…FLID, EICC…IIMH, and KIRP…LLVG. Positions 850–854 are adenine-nucleotide binding in RNA target; the sequence is SRFIQ. The uracil-nucleotide binding in RNA target stretch occupies residues 886 to 890; that stretch reads NYVIQ. Residues 922–926 form an adenine-nucleotide binding in RNA target region; sequence CRVIQ. A non-specific-nucleotide binding in RNA target region spans residues 958-962; it reads NHVVQ. The adenine-nucleotide binding in RNA target stretch occupies residues 994-998; it reads CRVIQ. Positions 1030 to 1034 are uracil-nucleotide binding in RNA target; that stretch reads NYVIQ. The interval 1066–1070 is guanine-nucleotide binding in RNA target; sequence SNVVE. Residues 1109–1113 form a uracil-nucleotide binding in RNA target region; sequence NYVVQ.

Component of a complex with papd4, sympk, tacc3, parn, dazl and cpeb1. In terms of processing, phosphorylated.

It localises to the cytoplasm. Its subcellular location is the P-body. The protein localises to the cytoplasmic granule. Functionally, sequence-specific RNA-binding protein that acts as a post-transcriptional repressor by binding the 3'-UTR of mRNA targets. Binds to an RNA consensus sequence, the Pumilio Response Element (PRE), 5'-UGUANAUA-3', that is related to the Nanos Response Element (NRE). Mediates post-transcriptional repression of transcripts via different mechanisms: acts via direct recruitment of deadenylase complexes leading to translational inhibition and mRNA degradation. Also mediates deadenylation-independent repression by promoting accessibility of miRNAs. The polypeptide is Pumilio homolog 2 (pum2) (Xenopus laevis (African clawed frog)).